The primary structure comprises 206 residues: Holliday junction branch migration complex subunit RuvA (206 aa).

Residues 1-63 (MIASLRGTVI…EDAMKLYGFI (63 aa)) are domain I. The interval 64–142 (DNESREMFSV…AFAAGVVDEG (79 aa)) is domain II. Positions 143–153 (GEQISLPNANI) are flexible linker. The tract at residues 154 to 206 (ASEVVVEQVSQALVGLGFSEKQSDDAVSFVLAADPSLDTSGALRAALAKLSGK) is domain III.

This sequence belongs to the RuvA family. Homotetramer. Forms an RuvA(8)-RuvB(12)-Holliday junction (HJ) complex. HJ DNA is sandwiched between 2 RuvA tetramers; dsDNA enters through RuvA and exits via RuvB. An RuvB hexamer assembles on each DNA strand where it exits the tetramer. Each RuvB hexamer is contacted by two RuvA subunits (via domain III) on 2 adjacent RuvB subunits; this complex drives branch migration. In the full resolvosome a probable DNA-RuvA(4)-RuvB(12)-RuvC(2) complex forms which resolves the HJ.

It localises to the cytoplasm. The RuvA-RuvB-RuvC complex processes Holliday junction (HJ) DNA during genetic recombination and DNA repair, while the RuvA-RuvB complex plays an important role in the rescue of blocked DNA replication forks via replication fork reversal (RFR). RuvA specifically binds to HJ cruciform DNA, conferring on it an open structure. The RuvB hexamer acts as an ATP-dependent pump, pulling dsDNA into and through the RuvAB complex. HJ branch migration allows RuvC to scan DNA until it finds its consensus sequence, where it cleaves and resolves the cruciform DNA. The sequence is that of Holliday junction branch migration complex subunit RuvA from Corynebacterium glutamicum (strain ATCC 13032 / DSM 20300 / JCM 1318 / BCRC 11384 / CCUG 27702 / LMG 3730 / NBRC 12168 / NCIMB 10025 / NRRL B-2784 / 534).